The following is a 508-amino-acid chain: Catalase (508 aa).

The first 21 residues, 1–21 (MHMSKSFLLISMGLASISVHA), serve as a signal peptide directing secretion. Catalysis depends on residues histidine 72 and asparagine 145. Tyrosine 353 is a binding site for heme. The span at 373 to 392 (PKSPVANHNQDGPSNNSTGL) shows a compositional bias: polar residues. The interval 373–396 (PKSPVANHNQDGPSNNSTGLGNVD) is disordered.

The protein belongs to the catalase family. It depends on heme as a cofactor.

The protein resides in the periplasm. The catalysed reaction is 2 H2O2 = O2 + 2 H2O. Functionally, decomposes hydrogen peroxide into water and oxygen; serves to protect cells from the toxic effects of hydrogen peroxide. The chain is Catalase from Vibrio vulnificus (strain CMCP6).